The chain runs to 288 residues: UPF0276 protein VP3015 (288 aa).

Belongs to the UPF0276 family.

The polypeptide is UPF0276 protein VP3015 (Vibrio parahaemolyticus serotype O3:K6 (strain RIMD 2210633)).